We begin with the raw amino-acid sequence, 867 residues long: Retinoblastoma-related protein 1 (867 aa).

A domain A region spans residues 275 to 476; sequence TPVTSAMTTA…EKGSSLYNSL (202 aa). The tract at residues 275-722 is pocket; binds RPD3I and RBAP1; sequence TPVTSAMTTA…NEVFVPAAKP (448 aa). A spacer region spans residues 477–594; that stretch reads IVARPSVASE…PVGGNEKCAD (118 aa). The tract at residues 512–563 is disordered; it reads EGLPATPSKKRAAGPDDNADPRSPKRSCNESRNTVVERNLQTPPPKQSHMVS. The segment covering 530–540 has biased composition (basic and acidic residues); the sequence is ADPRSPKRSCN. Residues 541–552 are compositionally biased toward polar residues; sequence ESRNTVVERNLQ. The segment at 595–722 is domain B; that stretch reads VTIHIFFSKI…NEVFVPAAKP (128 aa). 2 disordered regions span residues 734–762 and 843–867; these read PEDK…MSPK and QING…ETDT.

Belongs to the retinoblastoma protein (RB) family. In terms of assembly, interacts with RPD3I, RBAP1, the Arabidopsis cyclin CYCD3-1, the mastrevirus replication-associated protein A (RepA) and the begomovirus replication-associated protein (Rep). Ubiquitous.

Its subcellular location is the nucleus. In terms of biological role, regulator of biological processes that recruits a histone deacetylase to control gene transcription. May play a role in the entry into mitosis, negatively regulating the cell proliferation. Formation of stable complexes with geminiviridae replication-associated proteins may create a cellular environment which favors viral DNA replication. The polypeptide is Retinoblastoma-related protein 1 (RBR1) (Zea mays (Maize)).